The primary structure comprises 516 residues: Flavonoid-6-hydroxylase (516 aa).

A helical transmembrane segment spans residues 3 to 23 (FNAAVCAALAFISLLSYYLIW). Position 455 (C455) interacts with heme.

The protein belongs to the cytochrome P450 family. Heme is required as a cofactor.

The protein resides in the membrane. It carries out the reaction genkwanin + reduced [NADPH--hemoprotein reductase] + O2 = scutellarein 7-methyl ether + oxidized [NADPH--hemoprotein reductase] + H2O. The catalysed reaction is (2S)-sakuranetin + reduced [NADPH--hemoprotein reductase] + O2 = (2S)-7-methylcarthamidin + oxidized [NADPH--hemoprotein reductase] + H2O + H(+). It catalyses the reaction apigenin 4',7-dimethyl ether + reduced [NADPH--hemoprotein reductase] + O2 = ladanein + oxidized [NADPH--hemoprotein reductase] + H2O + H(+). The enzyme catalyses (2S)-naringenin 4',7-dimethyl ether + reduced [NADPH--hemoprotein reductase] + O2 = (2S)-carthamidin-4',7-dimethyl ether + oxidized [NADPH--hemoprotein reductase] + H2O + H(+). Its pathway is flavonoid metabolism. Its function is as follows. 6-OH hydroxylase involved in the biosynthesis of polymethoxylated flavonoids natural products such as pebrellin, aroma compounds which contribute to the flavor of peppermint, and exhibit pharmacological activities such as anti-allergic, anti-oxidant, antibacterial, anti-proliferative, and anti-inflammatory effects. Catalyzes the 6-hydroxylation of 7-O-methylated precursors such as the conversion of genkwanin (GENK) to scutellarein-7-methyl ether (SCU7Me). Can also use apigenin-7,4'-dimethyl ether (AdM), naringenin-7-methyl ether (SAK) and naringenin-7,4'-dimethyl ether (NdM) as substrates. The sequence is that of Flavonoid-6-hydroxylase from Mentha piperita (Peppermint).